Reading from the N-terminus, the 364-residue chain is MKVGDRHYHTIWLNEDGRSVDIIDQRWLPHEFRVVTLKTIADIAVAIRDMWVRGAPLIGVTAAYGVAIAMAEDPSDTHLDSVWEELHETRPTAINLRWALNAMREHLRALPEQERAEAAYQRAAEIAEEDIELNRAIGANGLKVIREIAARKKPGEPVKILTHCNAGWLATVDYGTATAPIYMAVEEGLPVHVYVDETRPRNQGAYLTAWEMNGHGVPHTLIVDNAGGHLMQHGDVDLVIVGTDRTTANGDVCNKIGTYLKALAARDNGIPFYVALPSPTIDWTVHDGVKEIPIEERAGEEVSFVQGRAPDGSIASVRISPEGSPAANPAFDVTPARLITGLITERGVADASPEGLKALFPERS.

Substrate is bound by residues R53 to A55, R90, and Q203. Residue D244 is the Proton donor of the active site. Substrate is bound at residue N254–K255.

Belongs to the eIF-2B alpha/beta/delta subunits family. MtnA subfamily.

The enzyme catalyses 5-(methylsulfanyl)-alpha-D-ribose 1-phosphate = 5-(methylsulfanyl)-D-ribulose 1-phosphate. The protein operates within amino-acid biosynthesis; L-methionine biosynthesis via salvage pathway; L-methionine from S-methyl-5-thio-alpha-D-ribose 1-phosphate: step 1/6. In terms of biological role, catalyzes the interconversion of methylthioribose-1-phosphate (MTR-1-P) into methylthioribulose-1-phosphate (MTRu-1-P). The protein is Methylthioribose-1-phosphate isomerase of Sinorhizobium medicae (strain WSM419) (Ensifer medicae).